A 422-amino-acid chain; its full sequence is Probable D-serine dehydratase (422 aa).

K105 is subject to N6-(pyridoxal phosphate)lysine.

This sequence belongs to the serine/threonine dehydratase family. DsdA subfamily. Pyridoxal 5'-phosphate serves as cofactor.

The catalysed reaction is D-serine = pyruvate + NH4(+). This is Probable D-serine dehydratase from Carboxydothermus hydrogenoformans (strain ATCC BAA-161 / DSM 6008 / Z-2901).